Reading from the N-terminus, the 76-residue chain is Virulence-associated protein VagC (76 aa).

Positions 4–45 constitute a SpoVT-AbrB domain; that stretch reads VSIFKNGNNRAIRLPRDLDFEGVSELEIVREGDSIILRPVRP.

It belongs to the VapB family.

The sequence is that of Virulence-associated protein VagC (vagC) from Salmonella dublin.